Reading from the N-terminus, the 511-residue chain is MKKADILVLDFGSQYTQLIARRLREQGVYAEILPFNVSLADIKAKEPKGIILSGGPASVYATDAYFCDKGIFDLNLPVLGICYGMQLMAHHYKATVAPAGHKEYGKANIEIKKDNALFKNLPKKQTVWMSHSDKVENLPQGFEVLATSENSPFCVFGNEDKKFFALQFHPEVQHSEFGKNILKNFAKYACNCESIWNMGSFAKTQAEKIREEVGNDKVLCAVSGGVDSSVVAALLASAIKEQIIVVFVDNGLLRSGEKEQVEFMFKNTLGIDLISIDASEIFLSRLVNVTDPEQKRKIIGNTFIEVFEEEAKKHKDVKYLAQGTLYTDIIESSVVGASKTIKSHHNVGGLPEKMNLKLIEPLKEIFKDEVRALGLELGLSKEVVYRHPFPGPGLAIRIMGEVNRASLELLRKADVILLEELKSTGWYDKTWQAFCVLLNVKSVGVMGDNRTYDNAVCIRVVDASDGMTATFSHLPYEILENISRRIINEVEGINRVVYDISSKPPATIEWE.

The 191-residue stretch at 5–195 folds into the Glutamine amidotransferase type-1 domain; the sequence is DILVLDFGSQ…AKYACNCESI (191 aa). C82 acts as the Nucleophile in catalysis. Residues H169 and E171 contribute to the active site. The GMPS ATP-PPase domain occupies 196-386; the sequence is WNMGSFAKTQ…LGLSKEVVYR (191 aa). 223–229 provides a ligand contact to ATP; sequence SGGVDSS.

In terms of assembly, homodimer.

The catalysed reaction is XMP + L-glutamine + ATP + H2O = GMP + L-glutamate + AMP + diphosphate + 2 H(+). The protein operates within purine metabolism; GMP biosynthesis; GMP from XMP (L-Gln route): step 1/1. In terms of biological role, catalyzes the synthesis of GMP from XMP. In Campylobacter jejuni subsp. jejuni serotype O:2 (strain ATCC 700819 / NCTC 11168), this protein is GMP synthase [glutamine-hydrolyzing] (guaA).